We begin with the raw amino-acid sequence, 214 residues long: Non-structural protein NP-1 (214 aa).

Disordered regions lie at residues 1-87 (MSSE…TNPY) and 192-214 (ESEEVTDEEMLSAVESMDTNASN). The segment covering 33–43 (SRSRSPIRRHG) has biased composition (basic residues). Over residues 44-55 (EKNLEYAHHSNQ) the composition is skewed to basic and acidic residues. Residues 56 to 71 (ENRQSSYTALKTSDQA) are compositionally biased toward polar residues. Acidic residues predominate over residues 192-201 (ESEEVTDEEM).

The protein belongs to the Bocaparvovirus Non-structural protein NP-1 family.

The protein localises to the host nucleus. Required for the expression of the capsid proteins. Performs the splicing and internal polyadenylation of the viral capsid-encoding mRNA precursor, which allows its maturation and expression. Transactivates the viral promoter. This is Non-structural protein NP-1 (NP1) from Human bocavirus 2 (HBoV2).